Consider the following 2311-residue polypeptide: Protein Ycf2 (2311 aa).

ATP is bound at residue 1652-1659 (GSIGTGRS).

Belongs to the Ycf2 family.

The protein localises to the plastid. It is found in the chloroplast stroma. Its function is as follows. Probable ATPase of unknown function. Its presence in a non-photosynthetic plant (Epifagus virginiana) and experiments in tobacco indicate that it has an essential function which is probably not related to photosynthesis. The protein is Protein Ycf2 of Lemna minor (Common duckweed).